A 357-amino-acid polypeptide reads, in one-letter code: Dehydrogenase FUB6 (357 aa).

It belongs to the zinc-containing alcohol dehydrogenase family. Quinone oxidoreductase subfamily.

Its pathway is mycotoxin biosynthesis. Dehydrogenase; part of the gene cluster that mediates the biosynthesis of fusaric acid, a mycotoxin with low to moderate toxicity to animals and humans, but with high phytotoxic properties. L-aspartate is suggested as fusaric acid amino acid precursor that is activated and further processed to O-acetyl-L-homoserine by cluster enzymes aspartate kinase FUB3 and homoserine O-acetyltransferase FUB5, as well as enzymes of the primary metabolism. The polyketide synthase (PKS) FUB1 generates the triketide trans-2-hexenal which is presumptively released by the hydrolase FUB4 and linked to the NRPS-bound amino acid precursor by NAD(P)-dependent dehydrogenase FUB6. FUB1, FUB4, and the non-canonical NRPS Fub8 may form an enzyme complex. Further processing of the NRPS-bound intermediate might be carried out by FUB6 and the O-acetylhomoserine FUB7, enabling a spontaneous electrocyclization to close the carbon backbone of fusaric acid. Dihydrofusaric acid is likely to be released via reduction by the thioester reductase (TR) domain of FUB8 whereupon the final oxidation to fusaric acid may (also) be performed by the FMN-dependent dehydrogenase FUB9. The protein is Dehydrogenase FUB6 of Gibberella moniliformis (strain M3125 / FGSC 7600) (Maize ear and stalk rot fungus).